Consider the following 475-residue polypeptide: E3 ubiquitin-protein ligase TRIM62 (475 aa).

The RING-type zinc finger occupies 11–54 (CSICLSIYQDPVSLGCEHYFCRRCITEHWVRQEAQGARDCPECR). A B box-type zinc finger spans residues 88-128 (RAARPCQAHDKVKLFCLTDRALLCFFCDEPALHEQHQVTGI). The Zn(2+) site is built by C93, H96, C114, and H120. The stretch at 121 to 241 (EQHQVTGIDD…LQERLAETDR (121 aa)) forms a coiled coil. The region spanning 277–475 (PLQYTIWKSL…QPLRINTVRI (199 aa)) is the B30.2/SPRY domain.

It belongs to the TRIM/RBCC family. As to quaternary structure, interacts with the ubiquitin-conjugating enzyme, UBE2D2. In terms of processing, polyubiquitinated, autoubiquitinated in the presence of UBE2D2.

Its subcellular location is the cytoplasm. It carries out the reaction S-ubiquitinyl-[E2 ubiquitin-conjugating enzyme]-L-cysteine + [acceptor protein]-L-lysine = [E2 ubiquitin-conjugating enzyme]-L-cysteine + N(6)-ubiquitinyl-[acceptor protein]-L-lysine.. It participates in protein modification; protein ubiquitination. Functionally, E3 ubiquitin ligase that plays a role in antifungal immunity by mediating 'Lys-27'-linked ubiquitination of CARD9 downstream of C-type lectin receptors; leading to CARD9 activation, followed by activation of NF-kappa-B and MAP kinase p38 pathways. E3 ubiquitin ligase activity is dependent on E2 ubiquitin-conjugating enzyme UBE2D2. This is E3 ubiquitin-protein ligase TRIM62 from Mus musculus (Mouse).